We begin with the raw amino-acid sequence, 274 residues long: Putative phosphoenolpyruvate synthase regulatory protein (274 aa).

Residue 155 to 162 coordinates ADP; the sequence is GVSRSGKT.

The protein belongs to the pyruvate, phosphate/water dikinase regulatory protein family. PSRP subfamily.

It carries out the reaction [pyruvate, water dikinase] + ADP = [pyruvate, water dikinase]-phosphate + AMP + H(+). The catalysed reaction is [pyruvate, water dikinase]-phosphate + phosphate + H(+) = [pyruvate, water dikinase] + diphosphate. Its function is as follows. Bifunctional serine/threonine kinase and phosphorylase involved in the regulation of the phosphoenolpyruvate synthase (PEPS) by catalyzing its phosphorylation/dephosphorylation. This chain is Putative phosphoenolpyruvate synthase regulatory protein, found in Laribacter hongkongensis (strain HLHK9).